A 458-amino-acid chain; its full sequence is Cysteine--tRNA ligase (458 aa).

Cysteine 29 is a Zn(2+) binding site. Residues 31 to 41 (MTVYDLCHLGH) carry the 'HIGH' region motif. Zn(2+) contacts are provided by cysteine 213, histidine 238, and glutamate 242. The short motif at 270 to 274 (KMSKS) is the 'KMSKS' region element. Lysine 273 is an ATP binding site.

The protein belongs to the class-I aminoacyl-tRNA synthetase family. As to quaternary structure, monomer. It depends on Zn(2+) as a cofactor.

The protein resides in the cytoplasm. The catalysed reaction is tRNA(Cys) + L-cysteine + ATP = L-cysteinyl-tRNA(Cys) + AMP + diphosphate. This Acidovorax ebreus (strain TPSY) (Diaphorobacter sp. (strain TPSY)) protein is Cysteine--tRNA ligase.